A 468-amino-acid polypeptide reads, in one-letter code: Aspartate ammonia-lyase (468 aa).

Residues Thr-99, Ser-138, Thr-139, Asn-140, and Thr-185 each contribute to the L-aspartate site. The SS loop stretch occupies residues 315 to 324 (GSSIMPGKVN). Ser-316 functions as the Proton acceptor in the catalytic mechanism. The L-aspartate site is built by Ser-317 and Lys-322.

This sequence belongs to the class-II fumarase/aspartase family. Aspartase subfamily. In terms of assembly, homotetramer.

The catalysed reaction is L-aspartate = fumarate + NH4(+). Functionally, catalyzes the reversible conversion of L-aspartate to fumarate and ammonia. The polypeptide is Aspartate ammonia-lyase (aspA) (Helicobacter pylori (strain J99 / ATCC 700824) (Campylobacter pylori J99)).